The primary structure comprises 106 residues: Small ribosomal subunit protein uS10 (106 aa).

This sequence belongs to the universal ribosomal protein uS10 family. In terms of assembly, part of the 30S ribosomal subunit.

Its function is as follows. Involved in the binding of tRNA to the ribosomes. The protein is Small ribosomal subunit protein uS10 of Pyrobaculum aerophilum (strain ATCC 51768 / DSM 7523 / JCM 9630 / CIP 104966 / NBRC 100827 / IM2).